The chain runs to 250 residues: Imidazole glycerol phosphate synthase subunit HisF (250 aa).

Active-site residues include D11 and D130.

Belongs to the HisA/HisF family. In terms of assembly, heterodimer of HisH and HisF.

It localises to the cytoplasm. The enzyme catalyses 5-[(5-phospho-1-deoxy-D-ribulos-1-ylimino)methylamino]-1-(5-phospho-beta-D-ribosyl)imidazole-4-carboxamide + L-glutamine = D-erythro-1-(imidazol-4-yl)glycerol 3-phosphate + 5-amino-1-(5-phospho-beta-D-ribosyl)imidazole-4-carboxamide + L-glutamate + H(+). Its pathway is amino-acid biosynthesis; L-histidine biosynthesis; L-histidine from 5-phospho-alpha-D-ribose 1-diphosphate: step 5/9. In terms of biological role, IGPS catalyzes the conversion of PRFAR and glutamine to IGP, AICAR and glutamate. The HisF subunit catalyzes the cyclization activity that produces IGP and AICAR from PRFAR using the ammonia provided by the HisH subunit. The chain is Imidazole glycerol phosphate synthase subunit HisF from Elusimicrobium minutum (strain Pei191).